We begin with the raw amino-acid sequence, 256 residues long: Nuclear shuttle protein (256 aa).

Polar residues predominate over residues 1–16 (MYSTSNRRGRSQTQRG). A disordered region spans residues 1–46 (MYSTSNRRGRSQTQRGSHVRRTGVKRSYGAARGDDRRRPNVVSKTQ). The Bipartite nuclear localization signal motif lies at 21-42 (RTGVKRSYGAARGDDRRRPNVV). The Nuclear localization signal motif lies at 81–96 (SYVKTVPNRTRTYIKL). An interaction with Arabidopsis thaliana NSI protein region spans residues 150–187 (ELFGARIHCHGNLSVVPALKDRYYIRHVTKRVVSLEKD). Residues 177 to 198 (VTKRVVSLEKDTLLIDLHGTTQ) carry the Nuclear export signal motif.

This sequence belongs to the begomovirus nuclear shuttle protein family. Binds to single-stranded and double-stranded viral DNA. Interacts with the host nuclear shuttle interacting (NSI) protein. This interaction may allow NSP to recruit NSI monomers to the viral genome and thus regulate nuclear export of viral genome by NSP.

It is found in the host nucleus. The protein resides in the host cytoplasm. The protein localises to the host cell membrane. In terms of biological role, binds to the genomic viral ssDNA, shuttles it into and out of the cell nucleus. Begomoviruses use 2 proteins to transport their DNA from cell to cell. The nuclear shuttle protein (NSP) shuttles it between nucleus and cytoplasm and the movement protein (MP) probably transports the DNA-NSP complex to the cell periphery and facilitates movement across the cell wall. In Squash leaf curl virus (SLCV), this protein is Nuclear shuttle protein.